Here is a 734-residue protein sequence, read N- to C-terminus: Transcription factor EMB1444 (734 aa).

The tract at residues 537–566 (QFPTSLEIPKKNKKRAKPGESSRPRPRDRQ) is disordered. A Nuclear localization signal motif is present at residues 548–555 (NKKRAKPG). A bHLH domain is found at 552 to 601 (AKPGESSRPRPRDRQLIQDRIKELRELVPNGSKCSIDSLLECTIKHMLFL). Residues 553-566 (KPGESSRPRPRDRQ) are compositionally biased toward basic and acidic residues.

The protein belongs to the bHLH protein family. LHW subfamily. Homodimer.

The protein resides in the nucleus. Its function is as follows. Transcription factor that may regulate root development. In Arabidopsis thaliana (Mouse-ear cress), this protein is Transcription factor EMB1444.